A 313-amino-acid chain; its full sequence is MTLPTTQNGPLRHFLQFKDLTASEIGYVLDRARIIKDKFKRYEPHMPLHDRTLAMVFEKASTRTRVSFEAGMYQMGGSVINLTSNDSQLGRSEPIEDTARVVSRMVDIVMIRTFEQTRIERFAAHSRVPVINGLTNEYHPCQILADIFTYIEHRGSIAGRIVAWVGDANNMSYTWLQAAEMLGFTLHVSTPAGYQLDPARIGNPPPSVLKQFKDPMQACQGAHLVTTDVWTSMGYEAENEERRKAFADWCVDAEMMAAADPNAVFMHCLPAHRGEEVTGEVIDGPQSVVWDEAENRMHAQKALMEFLLLGEIH.

Carbamoyl phosphate contacts are provided by residues Ser61–Thr64, Gln88, Arg112, and His139–Gln142. Residues Asn170, Asp228, and Ser232–Met233 contribute to the L-ornithine site. Carbamoyl phosphate contacts are provided by residues Cys268–Leu269 and Arg296.

Belongs to the aspartate/ornithine carbamoyltransferase superfamily. OTCase family.

The protein localises to the cytoplasm. It catalyses the reaction carbamoyl phosphate + L-ornithine = L-citrulline + phosphate + H(+). Its pathway is amino-acid biosynthesis; L-arginine biosynthesis; L-arginine from L-ornithine and carbamoyl phosphate: step 1/3. Reversibly catalyzes the transfer of the carbamoyl group from carbamoyl phosphate (CP) to the N(epsilon) atom of ornithine (ORN) to produce L-citrulline. This Bordetella avium (strain 197N) protein is Ornithine carbamoyltransferase.